Reading from the N-terminus, the 494-residue chain is Alpha-amylase-related protein (494 aa).

The N-terminal stretch at 1-20 (MFKFASAVILCVVAASSTLA) is a signal peptide. Q21 bears the Pyrrolidone carboxylic acid mark. The cysteines at positions 48 and 104 are disulfide-linked. N118, Q169, and D178 together coordinate Ca(2+). A disulfide bond links C157 and C171. R206 serves as a coordination point for chloride. Residue D208 is the Nucleophile of the active site. Position 212 (H212) interacts with Ca(2+). E245 (proton donor) is an active-site residue. Positions 308 and 343 each coordinate chloride. Cystine bridges form between C376–C382, C418–C441, and C448–C460.

This sequence belongs to the glycosyl hydrolase 13 family. Monomer. It depends on Ca(2+) as a cofactor. Requires chloride as cofactor.

Its subcellular location is the secreted. The catalysed reaction is Endohydrolysis of (1-&gt;4)-alpha-D-glucosidic linkages in polysaccharides containing three or more (1-&gt;4)-alpha-linked D-glucose units.. This Drosophila varians (Fruit fly) protein is Alpha-amylase-related protein (Amyrel).